Here is a 491-residue protein sequence, read N- to C-terminus: 3-phosphoinositide-dependent protein kinase 1 (491 aa).

Residues 44-311 (FEFGKIYGVG…YVALKRHPFF (268 aa)) form the Protein kinase domain. Residues 54-56 (SYS) and Lys-73 each bind ATP. Residues 75–119 (MDKKFITKENKTAYVKLERIVLDQLEHPGIIKLYFTFQDTSSLYM) form a PIF-pocket region. Residues 77 to 112 (KKFITKENKTAYVKLERIVLDQLEHPGIIKLYFTFQ) form a PIF-binding region. ATP is bound by residues 122–124 (ESC) and Glu-128. Catalysis depends on Asp-167, which acts as the Proton acceptor. Glu-171 provides a ligand contact to ATP. Ser-177 is modified (phosphoserine). Asp-185 is a binding site for ATP. The tract at residues 185 to 222 (DFGSVKPMQDSQITVLPNAASDDKACTFVGTAAYVPPE) is activation loop. Residue Thr-211 is modified to Phosphothreonine; by autocatalysis. Ser-276 and Ser-337 each carry phosphoserine. Residues 321–377 (SQTPPKLAPDPASQTASPERDDTHGSPWNLTHIGDSLATQNEGHSAPPTSSESSGSI) form a disordered region. A compositionally biased stretch (low complexity) spans 365–376 (SAPPTSSESSGS). Ser-382 bears the Phosphoserine mark. The region spanning 386–491 (FDSRWQQFLE…KKAIETLQNR (106 aa)) is the PH domain.

It belongs to the protein kinase superfamily. AGC Ser/Thr protein kinase family. PDPK1 subfamily. In terms of assembly, interacts with AGC1-5 and AGC1-7. Interacts with the C-terminal PIF domain of the protein kinases D6PK/AGC1-1, OXI1/AGC2-1 and PID. In terms of processing, phosphorylation on Thr-211 in the activation loop is required for full activity. PDK1 itself can autophosphorylate Thr-211, leading to its own activation. As to expression, ubiquitous.

The protein resides in the cytoplasm. It localises to the membrane. It carries out the reaction L-seryl-[protein] + ATP = O-phospho-L-seryl-[protein] + ADP + H(+). It catalyses the reaction L-threonyl-[protein] + ATP = O-phospho-L-threonyl-[protein] + ADP + H(+). Its activity is regulated as follows. Activated by phosphatidic acid (PA) and in response to the fungal elicitor xylanase. Functionally, may couple lipid signals to the activation-loop phosphorylation of several protein kinases of the so-called AGC kinase family. Interacts via its pleckstrin homology domain with phosphatidic acid, PtdIns3P and PtdIns(3,4)P2 and to a lesser extent with PtdIns(4,5)P2 and PtdIns4P. May play a general role in signaling processes controlling the pathogen/stress response, polar auxin transport and development. Transphosphorylates the AGC protein kinases OXI1/AGC2-1, PK1/S6K1, PK19/S6K2 and PID resulting in their activation. The chain is 3-phosphoinositide-dependent protein kinase 1 (PDPK1) from Arabidopsis thaliana (Mouse-ear cress).